Consider the following 140-residue polypeptide: Midkine (140 aa).

An N-terminal signal peptide occupies residues M1 to A20. Intrachain disulfides connect C34–C58, C42–C67, C49–C71, C81–C113, and C91–C123.

Belongs to the pleiotrophin family. In terms of assembly, homodimer. Interacts with ALK. Interacts with LRP1; promotes neuronal survival. Interacts with LRP2. Interacts with NCAM1. Interacts (via C-terminal) with PTPRZ1 (via chondroitin sulfate chains); this interaction is inhibited by PTN; this interaction promotes neuronal migration. Interacts with NCL; this interaction promotes NCL clustering and lateral movements of this complex into lipid rafts leading to MDK internalization. Interacts with LRP6 and LRP8: this interaction is calcium dependent. Interacts with ITGA4. Interacts with ITGA6. Interacts with ITGB1. Interacts with ITGA4:ITGB1 complex; this interaction mediates MDK-induced osteoblast cells migration through PXN phosphorylation. Interacts with ITGA6:ITGB1 complex; this interaction mediates MDK-induced neurite outgrowth. Interacts with NOTCH2; this interactio mediates a nuclear accumulation of NOTCH2 and therefore activation of NOTCH2 signaling leading to interaction between HES1 and STAT3. Interacts with GPC2 (via heparan sulfate chain); this interaction is inhibited by heparin followed by chondroitin sulfate E; this interaction induces GPC2 clustering through heparan sulfate chain; this interaction induces neuronal cell adhesion and neurite outgrowth. Interacts with SDC3; this interaction induces SDC3 clustering; this interaction induces neuronal cell adhesion and neurite outgrowth. Interacts with SDC1. Interacts with CSPG5; this interaction promotes elongation of oligodendroglial precursor-like cells. Expressed at a low level in arteries, and at higher levels in newly formed neointima. In brain, expressed in the caudate nucleus and the brain stem.

The protein resides in the secreted. Developmentally regulated, secreted growth factor homologous to pleiotrophin (PTN), which has heparin binding activity. Binds anaplastic lymphoma kinase (ALK) which induces ALK activation and subsequent phosphorylation of the insulin receptor substrate (IRS1), followed by the activation of mitogen-activated protein kinase (MAPK) and PI3-kinase, and the induction of cell proliferation. Involved in neointima formation after arterial injury, possibly by mediating leukocyte recruitment. Also involved in early fetal adrenal gland development. Functionally, secreted protein that functions as a cytokine and growth factor and mediates its signal through cell-surface proteoglycan and non-proteoglycan receptors. Binds cell-surface proteoglycan receptors via their chondroitin sulfate (CS) groups. Thereby regulates many processes like inflammatory response, cell proliferation, cell adhesion, cell growth, cell survival, tissue regeneration, cell differentiation and cell migration. Participates in inflammatory processes by exerting two different activities. Firstly, mediates neutrophils and macrophages recruitment to the sites of inflammation both by direct action by cooperating namely with ITGB2 via LRP1 and by inducing chemokine expression. This inflammation can be accompanied by epithelial cell survival and smooth muscle cell migration after renal and vessel damage, respectively. Secondly, suppresses the development of tolerogenic dendric cells thereby inhibiting the differentiation of regulatory T cells and also promote T cell expansion through NFAT signaling and Th1 cell differentiation. Promotes tissue regeneration after injury or trauma. After heart damage negatively regulates the recruitment of inflammatory cells and mediates cell survival through activation of anti-apoptotic signaling pathways via MAPKs and AKT pathways through the activation of angiogenesis. Also facilitates liver regeneration as well as bone repair by recruiting macrophage at trauma site and by promoting cartilage development by facilitating chondrocyte differentiation. Plays a role in brain by promoting neural precursor cells survival and growth through interaction with heparan sulfate proteoglycans. Binds PTPRZ1 and promotes neuronal migration and embryonic neurons survival. Binds SDC3 or GPC2 and mediates neurite outgrowth and cell adhesion. Binds chondroitin sulfate E and heparin leading to inhibition of neuronal cell adhesion induced by binding with GPC2. Binds CSPG5 and promotes elongation of oligodendroglial precursor-like cells. Also binds ITGA6:ITGB1 complex; this interaction mediates MDK-induced neurite outgrowth. Binds LRP1; promotes neuronal survival. Binds ITGA4:ITGB1 complex; this interaction mediates MDK-induced osteoblast cells migration through PXN phosphorylation. Binds anaplastic lymphoma kinase (ALK) which induces ALK activation and subsequent phosphorylation of the insulin receptor substrate (IRS1), followed by the activation of mitogen-activated protein kinase (MAPK) and PI3-kinase, and the induction of cell proliferation. Promotes epithelial to mesenchymal transition through interaction with NOTCH2. During arteriogenesis, plays a role in vascular endothelial cell proliferation by inducing VEGFA expression and release which in turn induces nitric oxide synthase expression. Moreover activates vasodilation through nitric oxide synthase activation. Negatively regulates bone formation in response to mechanical load by inhibiting Wnt/beta-catenin signaling in osteoblasts. In addition plays a role in hippocampal development, working memory, auditory response, early fetal adrenal gland development and the female reproductive system. The chain is Midkine from Rattus norvegicus (Rat).